Reading from the N-terminus, the 386-residue chain is Probable protein phosphatase 2C 36 (386 aa).

Residues 60–363 (ELSVAVVQGN…DDITVIVLFI (304 aa)) form the PPM-type phosphatase domain. Positions 94, 95, 295, and 354 each coordinate Mn(2+).

Belongs to the PP2C family. The cofactor is Mg(2+). Requires Mn(2+) as cofactor.

The enzyme catalyses O-phospho-L-seryl-[protein] + H2O = L-seryl-[protein] + phosphate. The catalysed reaction is O-phospho-L-threonyl-[protein] + H2O = L-threonyl-[protein] + phosphate. This chain is Probable protein phosphatase 2C 36, found in Oryza sativa subsp. japonica (Rice).